A 1750-amino-acid chain; its full sequence is Protein TIC 214 (1750 aa).

The next 6 membrane-spanning stretches (helical) occupy residues 12–32 (KIIN…ALSI), 69–89 (FIMG…YVAL), 97–117 (ILAL…SFFA), 129–149 (LEIY…SCIL), 177–197 (FAWF…LVWI), and 216–236 (IFVI…SIQC). Residues 260-277 (RERLQKEEERGVEKKEQS) show a composition bias toward basic and acidic residues. 5 disordered regions span residues 260 to 282 (RERL…EEDP), 617 to 638 (ATTT…KKES), 718 to 738 (STDK…KQRE), 1205 to 1225 (RNSR…PKPV), and 1419 to 1512 (ETDS…NKKE). Residues 617–629 (ATTTNSKTNTTKD) are compositionally biased toward low complexity. The segment covering 727 to 738 (KKEEKRENKQRE) has biased composition (basic and acidic residues). Over residues 1420-1512 (TDSKQKSETD…TKSDKKNKKE (93 aa)) the composition is skewed to basic and acidic residues.

Belongs to the TIC214 family. As to quaternary structure, part of the Tic complex.

The protein localises to the plastid. It is found in the chloroplast inner membrane. Its function is as follows. Involved in protein precursor import into chloroplasts. May be part of an intermediate translocation complex acting as a protein-conducting channel at the inner envelope. The protein is Protein TIC 214 of Cuscuta reflexa (Southern Asian dodder).